The following is a 205-amino-acid chain: High frequency lysogenization protein HflD homolog (205 aa).

This sequence belongs to the HflD family.

It is found in the cytoplasm. The protein resides in the cell inner membrane. The polypeptide is High frequency lysogenization protein HflD homolog (Haemophilus influenzae (strain ATCC 51907 / DSM 11121 / KW20 / Rd)).